A 433-amino-acid chain; its full sequence is Chaperone SurA (433 aa).

Residues 1–28 (MTAITRITLTGALLAAALLLAALQPARA) form the signal peptide. 2 PpiC domains span residues 174-277 (NQEY…KLMD) and 286-386 (VTET…QVTD).

Its subcellular location is the periplasm. The enzyme catalyses [protein]-peptidylproline (omega=180) = [protein]-peptidylproline (omega=0). In terms of biological role, chaperone involved in the correct folding and assembly of outer membrane proteins. Recognizes specific patterns of aromatic residues and the orientation of their side chains, which are found more frequently in integral outer membrane proteins. May act in both early periplasmic and late outer membrane-associated steps of protein maturation. This Alkalilimnicola ehrlichii (strain ATCC BAA-1101 / DSM 17681 / MLHE-1) protein is Chaperone SurA.